Here is a 344-residue protein sequence, read N- to C-terminus: MKVIKTAPLIPSEIKVLEKEGNRVKISLAPFEFGYAVTLAHPIRRLLLLSSVGYAPVGLKIEGVHHEFDSLRGVTEDVSLFIMNLKNIRFIAKALVGQDSSLENQSVVVDYSFKGPMELRARDLNSDHIEIVNPEMPLATINEDAQLNFSLIIYKGMGYVPSENTRELMPEGYMPLDGSFTPIKNVVYEIENVLVEGDPNYEKIIFDIETDGQIDPYKAFLSAVKVMSKQLGVFGERPIANTEYSGDYAQRDDAKDLSAKIESMNLSARCFNCLDKIGIKYVGELVLMSEEELKGVKNMGKKSYDEIAEKLNDLGYPVGTELSPEQRESLKKRLEKLEDKGGND.

Positions 1–238 are alpha N-terminal domain (alpha-NTD); that stretch reads MKVIKTAPLI…KQLGVFGERP (238 aa). Residues 254–344 form an alpha C-terminal domain (alpha-CTD) region; it reads AKDLSAKIES…EKLEDKGGND (91 aa).

The protein belongs to the RNA polymerase alpha chain family. In terms of assembly, homodimer. The RNAP catalytic core consists of 2 alpha, 1 beta, 1 beta' and 1 omega subunit. When a sigma factor is associated with the core the holoenzyme is formed, which can initiate transcription.

It carries out the reaction RNA(n) + a ribonucleoside 5'-triphosphate = RNA(n+1) + diphosphate. DNA-dependent RNA polymerase catalyzes the transcription of DNA into RNA using the four ribonucleoside triphosphates as substrates. This is DNA-directed RNA polymerase subunit alpha from Helicobacter pylori (strain J99 / ATCC 700824) (Campylobacter pylori J99).